The following is a 160-amino-acid chain: Cytochrome b6-f complex subunit 4 (160 aa).

3 helical membrane-spanning segments follow: residues 36 to 56 (ILYM…GLAI), 95 to 115 (LLGI…PFIE), and 127 to 147 (PIAM…GAGA).

This sequence belongs to the cytochrome b family. PetD subfamily. The 4 large subunits of the cytochrome b6-f complex are cytochrome b6, subunit IV (17 kDa polypeptide, PetD), cytochrome f and the Rieske protein, while the 4 small subunits are PetG, PetL, PetM and PetN. The complex functions as a dimer.

It localises to the cellular thylakoid membrane. Its function is as follows. Component of the cytochrome b6-f complex, which mediates electron transfer between photosystem II (PSII) and photosystem I (PSI), cyclic electron flow around PSI, and state transitions. This is Cytochrome b6-f complex subunit 4 from Synechocystis sp. (strain ATCC 27184 / PCC 6803 / Kazusa).